The sequence spans 1433 residues: DNA polymerase III PolC-type (1433 aa).

The Exonuclease domain occupies 419–575 (FVVFDVETTG…YDAEATGHLL (157 aa)).

The protein belongs to the DNA polymerase type-C family. PolC subfamily.

It localises to the cytoplasm. It catalyses the reaction DNA(n) + a 2'-deoxyribonucleoside 5'-triphosphate = DNA(n+1) + diphosphate. Functionally, required for replicative DNA synthesis. This DNA polymerase also exhibits 3' to 5' exonuclease activity. In Halalkalibacterium halodurans (strain ATCC BAA-125 / DSM 18197 / FERM 7344 / JCM 9153 / C-125) (Bacillus halodurans), this protein is DNA polymerase III PolC-type.